The sequence spans 843 residues: Protein P (843 aa).

The tract at residues 1 to 177 (MPLSYQHFRK…FCGSPYSWEQ (177 aa)) is terminal protein domain (TP). The segment at 178–346 (ELQHGRLVLQ…HCLFHIVNLI (169 aa)) is spacer. Disordered regions lie at residues 221–240 (SRLG…QGGS) and 289–315 (VSTS…SRSQ). Residues 223–235 (LGPQPTQGQLAGL) show a composition bias toward low complexity. The segment at 347-690 (DDWGPCAEHG…YLNLYPVARQ (344 aa)) is polymerase/reverse transcriptase domain (RT). In terms of domain architecture, Reverse transcriptase spans 357–600 (EHRIRTPRTP…YSLNFMGYVI (244 aa)). Mg(2+) is bound by residues aspartate 429, aspartate 551, and aspartate 552.

The protein belongs to the hepadnaviridae P protein family.

It catalyses the reaction DNA(n) + a 2'-deoxyribonucleoside 5'-triphosphate = DNA(n+1) + diphosphate. It carries out the reaction Endonucleolytic cleavage to 5'-phosphomonoester.. Activated by host HSP70 and HSP40 in vitro to be able to bind the epsilon loop of the pgRNA. Because deletion of the RNase H region renders the protein partly chaperone-independent, the chaperones may be needed indirectly to relieve occlusion of the RNA-binding site by this domain. Inhibited by several reverse-transcriptase inhibitors: Lamivudine, Adefovir and Entecavir. In terms of biological role, multifunctional enzyme that converts the viral RNA genome into dsDNA in viral cytoplasmic capsids. This enzyme displays a DNA polymerase activity that can copy either DNA or RNA templates, and a ribonuclease H (RNase H) activity that cleaves the RNA strand of RNA-DNA heteroduplexes in a partially processive 3'- to 5'-endonucleasic mode. Neo-synthesized pregenomic RNA (pgRNA) are encapsidated together with the P protein, and reverse-transcribed inside the nucleocapsid. Initiation of reverse-transcription occurs first by binding the epsilon loop on the pgRNA genome, and is initiated by protein priming, thereby the 5'-end of (-)DNA is covalently linked to P protein. Partial (+)DNA is synthesized from the (-)DNA template and generates the relaxed circular DNA (RC-DNA) genome. After budding and infection, the RC-DNA migrates in the nucleus, and is converted into a plasmid-like covalently closed circular DNA (cccDNA). The activity of P protein does not seem to be necessary for cccDNA generation, and is presumably released from (+)DNA by host nuclear DNA repair machinery. The chain is Protein P from Homo sapiens (Human).